The primary structure comprises 460 residues: Equilibrative nucleoside transporter 1 (460 aa).

Topologically, residues 1 to 12 (MTTSHQPQDRYK) are cytoplasmic. The chain crosses the membrane as a helical span at residues 13–29 (AVWLIFFVLGLGTLLPW). Over 30–82 (NFFMTATKYFTNRLDVSQNVSSDTDQSCESTKALADPTVALPARSSLSAIFNN) the chain is Extracellular. N-linked (GlcNAc...) asparagine glycosylation is present at Asn-48. A helical transmembrane segment spans residues 83 to 107 (VMTLCAMLPLLVFTCLNSFLHQRIS). At 108–111 (QSVR) the chain is on the cytoplasmic side. A helical membrane pass occupies residues 112-130 (ILGSLLAILLVFLVTAALV). Residues 131-138 (KVEMDALI) are Extracellular-facing. A helical membrane pass occupies residues 139–157 (FFVITMIKIVLINSFGAIL). Over 158 to 174 (QASLFGLAGVLPANYTA) the chain is Cytoplasmic. A helical transmembrane segment spans residues 175-199 (PIMSGQGLAGFFTSVAMICAIASGS). Residues 200 to 206 (ELSESAF) lie on the Extracellular side of the membrane. A helical transmembrane segment spans residues 207 to 227 (GYFITACAVVILAILCYLALP). The Cytoplasmic segment spans residues 228 to 291 (RTEFYRHYLQ…IKAILKSICV (64 aa)). Ser-254 carries the phosphoserine modification. Basic and acidic residues predominate over residues 255–266 (KGEEPKGRREES). The interval 255–277 (KGEEPKGRREESGVPGPNSPPTN) is disordered. Ser-273 carries the phosphoserine modification. The chain crosses the membrane as a helical span at residues 292–311 (PALSVCFIFTVTIGLFPAVT). The Extracellular segment spans residues 312–323 (AEVESSIAGTSP). A helical transmembrane segment spans residues 324-342 (WKSYFIPVACFLNFNVFDW). At 343 to 359 (LGRSLTAVCMWPGQDSR) the chain is on the cytoplasmic side. Residues 360 to 378 (WLPVLVASRIVFIPLLMLC) traverse the membrane as a helical segment. The Extracellular portion of the chain corresponds to 379-397 (NVKARHCGAQRHHFVFKHD). The helical transmembrane segment at 398 to 417 (AWFIAFMAAFAFSNGYLASL) threads the bilayer. Residues 418-435 (CMCFGPKKVKPAEAETAG) are Cytoplasmic-facing. The chain crosses the membrane as a helical span at residues 436–456 (NIMSFFLCLGLALGAVLSFLL). Topologically, residues 457–460 (RALV) are extracellular.

This sequence belongs to the SLC29A/ENT transporter (TC 2.A.57) family. As to quaternary structure, identified in a complex with STOM. Post-translationally, glycosylated. In terms of tissue distribution, highly expressed in heart, spleen, lung, liver and testis. Lower level of expression in brain and kidney. Expressed in adipose tissues, brown adipocytes expressing significantly higher amounts than white adipocytes. Expressed in seminiferous tubules.

The protein resides in the basolateral cell membrane. The protein localises to the apical cell membrane. Its subcellular location is the cell membrane. The catalysed reaction is adenosine(in) = adenosine(out). It carries out the reaction guanosine(in) = guanosine(out). It catalyses the reaction inosine(in) = inosine(out). The enzyme catalyses uridine(out) = uridine(in). The catalysed reaction is thymidine(in) = thymidine(out). It carries out the reaction cytidine(in) = cytidine(out). It catalyses the reaction adenine(out) = adenine(in). The enzyme catalyses guanine(out) = guanine(in). The catalysed reaction is thymine(out) = thymine(in). It carries out the reaction uracil(in) = uracil(out). It catalyses the reaction hypoxanthine(out) = hypoxanthine(in). With respect to regulation, transporter activity is sensitive to low concentrations of the inhibitor nitrobenzylmercaptopurine riboside (NBMPR). Uniporter involved in the facilitative transport of nucleosides and nucleobases, and contributes to maintaining their cellular homeostasis. Functions as a Na(+)-independent transporter. Involved in the transport of nucleosides such as adenosine, guanosine, inosine, uridine, thymidine and cytidine. Also transports purine (hypoxanthine, adenine, guanine) and pyrimidine nucleobases (thymine, uracil). Mediates basolateral nucleoside uptake into Sertoli cells, thereby regulating the transport of nucleosides in testis across the blood-testis-barrier. Regulates inosine levels in brown adipocytes tissues (BAT) and extracellular inosine levels, which controls BAT-dependent energy expenditure. The chain is Equilibrative nucleoside transporter 1 from Mus musculus (Mouse).